A 482-amino-acid polypeptide reads, in one-letter code: tRNA-2-methylthio-N(6)-dimethylallyladenosine synthase (482 aa).

The 118-residue stretch at 3–120 (KKLHIKTWGC…LPEMIKQVQG (118 aa)) folds into the MTTase N-terminal domain. 6 residues coordinate [4Fe-4S] cluster: cysteine 12, cysteine 49, cysteine 83, cysteine 158, cysteine 162, and cysteine 165. Residues 144–376 (KADGPSAFVS…QNRITQMAQQ (233 aa)) form the Radical SAM core domain. One can recognise a TRAM domain in the interval 379-442 (RQMFDTEQRI…PNSLRGDLIR (64 aa)).

The protein belongs to the methylthiotransferase family. MiaB subfamily. Monomer. The cofactor is [4Fe-4S] cluster.

The protein localises to the cytoplasm. It carries out the reaction N(6)-dimethylallyladenosine(37) in tRNA + (sulfur carrier)-SH + AH2 + 2 S-adenosyl-L-methionine = 2-methylsulfanyl-N(6)-dimethylallyladenosine(37) in tRNA + (sulfur carrier)-H + 5'-deoxyadenosine + L-methionine + A + S-adenosyl-L-homocysteine + 2 H(+). Its function is as follows. Catalyzes the methylthiolation of N6-(dimethylallyl)adenosine (i(6)A), leading to the formation of 2-methylthio-N6-(dimethylallyl)adenosine (ms(2)i(6)A) at position 37 in tRNAs that read codons beginning with uridine. The chain is tRNA-2-methylthio-N(6)-dimethylallyladenosine synthase from Pseudoalteromonas translucida (strain TAC 125).